The following is a 334-amino-acid chain: Phenylalanine--tRNA ligase alpha subunit (334 aa).

Residue glutamate 249 participates in Mg(2+) binding.

This sequence belongs to the class-II aminoacyl-tRNA synthetase family. Phe-tRNA synthetase alpha subunit type 1 subfamily. In terms of assembly, tetramer of two alpha and two beta subunits. Mg(2+) is required as a cofactor.

Its subcellular location is the cytoplasm. It carries out the reaction tRNA(Phe) + L-phenylalanine + ATP = L-phenylalanyl-tRNA(Phe) + AMP + diphosphate + H(+). The chain is Phenylalanine--tRNA ligase alpha subunit from Desulfosudis oleivorans (strain DSM 6200 / JCM 39069 / Hxd3) (Desulfococcus oleovorans).